The chain runs to 320 residues: uncharacterized protein (320 aa).

The Arf-GAP domain occupies 13 to 132 (ALVLKSLLRE…VLYPEIPSPE (120 aa)). The segment at 28-52 (CADCKRNEQPRWASWNLGVFICIRC) adopts a C4-type zinc-finger fold. 3 disordered regions span residues 153–212 (NTAS…STRQ), 227–261 (RPQVSSSSITTNATYQNLPSPVSTSTTSSQPYGAF), and 284–320 (NVTSAQPSARASPVQSNSSRPRSSLDSKIINSHDVWK). The segment covering 154-176 (TASRSSSAHSVKSTSSATVTNVT) has biased composition (low complexity). 2 stretches are compositionally biased toward polar residues: residues 183–210 (SATTSLAQSSPNLASLSKQPSTVHAPST) and 228–244 (PQVSSSSITTNATYQNL). Composition is skewed to low complexity over residues 245–257 (PSPVSTSTTSSQP) and 295–310 (SPVQSNSSRPRSSLDS).

It is found in the cytoplasm. Its subcellular location is the golgi apparatus. In terms of biological role, GTPase-activating protein for the ADP ribosylation factor family. This is an uncharacterized protein from Schizosaccharomyces pombe (strain 972 / ATCC 24843) (Fission yeast).